We begin with the raw amino-acid sequence, 127 residues long: MGKAKAPRQLKDNEAKAVARTLRVSPQKLNLVASMIRGKKVNAALADLTFSRKRIAGTVKKTLESAIANAENNHDLDVDALIVAEAYVGKSIVMKRFHVRGRASRIEKPFSHLTIVVREVAEKGEAA.

The protein belongs to the universal ribosomal protein uL22 family. In terms of assembly, part of the 50S ribosomal subunit.

This protein binds specifically to 23S rRNA; its binding is stimulated by other ribosomal proteins, e.g. L4, L17, and L20. It is important during the early stages of 50S assembly. It makes multiple contacts with different domains of the 23S rRNA in the assembled 50S subunit and ribosome. In terms of biological role, the globular domain of the protein is located near the polypeptide exit tunnel on the outside of the subunit, while an extended beta-hairpin is found that lines the wall of the exit tunnel in the center of the 70S ribosome. The protein is Large ribosomal subunit protein uL22 of Brucella suis (strain ATCC 23445 / NCTC 10510).